Here is a 304-residue protein sequence, read N- to C-terminus: tRNA uridine(34) hydroxylase (304 aa).

The Rhodanese domain maps to 124 to 219; that stretch reads QDEETLLIDT…YLETIPKEES (96 aa). C179 (cysteine persulfide intermediate) is an active-site residue.

The protein belongs to the TrhO family.

It catalyses the reaction uridine(34) in tRNA + AH2 + O2 = 5-hydroxyuridine(34) in tRNA + A + H2O. In terms of biological role, catalyzes oxygen-dependent 5-hydroxyuridine (ho5U) modification at position 34 in tRNAs. This is tRNA uridine(34) hydroxylase from Bartonella quintana (strain Toulouse) (Rochalimaea quintana).